The chain runs to 385 residues: 3,5,7-trioxododecanoyl-CoA synthase (385 aa).

Residue Cys157 is part of the active site.

The protein belongs to the thiolase-like superfamily. Chalcone/stilbene synthases family. Expressed in bracts, flowers and young leaves. Not detected in mature leaves, roots and stems. Expressed in glandular trichomes.

The enzyme catalyses hexanoyl-CoA + 3 malonyl-CoA + 3 H(+) = 3,5,7-trioxododecanoyl-CoA + 3 CO2 + 3 CoA. It catalyses the reaction 3,5,7-trioxododecanoyl-CoA = olivetol + CO2 + CoA. It participates in secondary metabolite biosynthesis; terpenoid biosynthesis. Its function is as follows. Involved in the biosynthesis of cannabinoids-related terpenophenolic natural products, which have pharmacological activity. Polyketide synthase responsible for olivetol biosynthesis, from a C(12)-polyketide, probably 3,5,7-trioxododecanoyl-CoA. Catalyzes the first step in the cannabinoids biosynthetic pathway. The preferred substrate is hexanoyl-CoA, but also accepts CoA esters with C4 to C8 aliphatic side chains. When using malonyl-CoA and hexanoyl-CoA as substrates, produces undetermined compounds distinct form olivetol or olivetolic acid that could be hexanoyl triacetic acid lactone (HTAL) and pentyl diacetic acid lactone (PDAL). Produces olivetolic acid when acting in concert with olivetolic acid cyclase (OAC). This is 3,5,7-trioxododecanoyl-CoA synthase from Cannabis sativa (Hemp).